Here is a 2192-residue protein sequence, read N- to C-terminus: BEACH domain-containing protein lvsE (2192 aa).

4 disordered regions span residues 948–969 (STSL…TSTG), 996–1065 (TTTT…DEPE), 1160–1303 (NESQ…NNLS), and 1343–1363 (DENG…SSSN). Residues 996–1049 (TTTTTTTTTTTTTTSTTSNTGNDSPLSIESPISSPVLIENTTNTTNTTTTNTTN) are compositionally biased toward low complexity. Positions 1171-1187 (NIDNLNPNTGLPYNKST) are enriched in polar residues. The span at 1188–1231 (NNLSNVNNVNNNNNNNSNNINVSGNNTIGPSSSKSPLRNSRSMS) shows a compositional bias: low complexity. A compositionally biased stretch (polar residues) spans 1232–1243 (IGSSATKSPSRQ). 2 stretches are compositionally biased toward low complexity: residues 1253–1303 (NNNS…NNLS) and 1350–1363 (SSPN…SSSN). The BEACH-type PH domain maps to 1366–1491 (IEEEKFIGSW…ESIQIFNKIV (126 aa)). One can recognise a BEACH domain in the interval 1504–1795 (DHPSKIIKKS…QLFSKPHPIR (292 aa)). Residues 1823-1849 (GTINSSFSSTSTSTSTSSPPPSTLNSP) show a composition bias toward low complexity. A disordered region spans residues 1823–1851 (GTINSSFSSTSTSTSTSSPPPSTLNSPQG). WD repeat units follow at residues 1973–2012 (FHHD…IKDS), 2022–2061 (SHDE…YQRS), and 2156–2192 (DSPA…VKDL).

The protein is BEACH domain-containing protein lvsE (lvsE) of Dictyostelium discoideum (Social amoeba).